Reading from the N-terminus, the 229-residue chain is MAKLTKKMKAIKAGVDSTKAYEINEAIALLKQFATAKFVESVDVAVNLGIDPRKSDQNVRGATVLPHGTGRSARVAVFTQGANAEAAKAAGADLVGMEDLAEQIKKGEMNFDVVIASPDAMRVVGQLGQVLGPRGLMPNPKVGTVTLNVAEAVKNAKSGQIRYRNDKNGIIHTTIGKVDFSEVQLKENLQALLAALNKAKPTTAKGIFIKKVSVSTTMGAGVAVEQTSL.

The protein belongs to the universal ribosomal protein uL1 family. As to quaternary structure, part of the 50S ribosomal subunit.

In terms of biological role, binds directly to 23S rRNA. The L1 stalk is quite mobile in the ribosome, and is involved in E site tRNA release. Its function is as follows. Protein L1 is also a translational repressor protein, it controls the translation of the L11 operon by binding to its mRNA. The sequence is that of Large ribosomal subunit protein uL1 from Haemophilus ducreyi (strain 35000HP / ATCC 700724).